The chain runs to 525 residues: GMP synthase [glutamine-hydrolyzing] (525 aa).

The 199-residue stretch at 9–207 folds into the Glutamine amidotransferase type-1 domain; sequence RILILDFGSQ…VRDICQCEAL (199 aa). Residue Cys86 is the Nucleophile of the active site. Active-site residues include His181 and Glu183. The GMPS ATP-PPase domain maps to 208-400; it reads WTPAKIIDDA…LGLPYDMLYR (193 aa). 235 to 241 contacts ATP; that stretch reads SGGVDSS.

In terms of assembly, homodimer.

It carries out the reaction XMP + L-glutamine + ATP + H2O = GMP + L-glutamate + AMP + diphosphate + 2 H(+). The protein operates within purine metabolism; GMP biosynthesis; GMP from XMP (L-Gln route): step 1/1. Its function is as follows. Catalyzes the synthesis of GMP from XMP. This is GMP synthase [glutamine-hydrolyzing] from Salmonella newport (strain SL254).